A 169-amino-acid chain; its full sequence is Der GTPase-activating protein YihI (169 aa).

2 disordered regions span residues 1 to 100 (MKPS…AELE) and 144 to 169 (GLSY…LRGN). A compositionally biased stretch (basic residues) spans 10–19 (SKGHAKARRK). Basic and acidic residues predominate over residues 20 to 30 (TREELDQEARD). Residues 31 to 40 (RKRQKKRRGH) are compositionally biased toward basic residues. The segment covering 49 to 58 (GNTTSGSKGQ) has biased composition (polar residues). Over residues 147–159 (YDDDEEEEEDEKQ) the composition is skewed to acidic residues. Residues 160 to 169 (EDMMRLLRGN) are compositionally biased toward basic and acidic residues.

It belongs to the YihI family. As to quaternary structure, interacts with Der.

Functionally, a GTPase-activating protein (GAP) that modifies Der/EngA GTPase function. May play a role in ribosome biogenesis. The chain is Der GTPase-activating protein YihI from Escherichia coli O6:H1 (strain CFT073 / ATCC 700928 / UPEC).